Consider the following 80-residue polypeptide: Conotoxin SmIVB (80 aa).

An N-terminal signal peptide occupies residues 1–21 (MGMRMMFTVFLLVVLATTVVS). Residues 22–38 (IPSDRASDGRNAEVNER) constitute a propeptide that is removed on maturation. P40 is subject to 4-hydroxyproline. O-linked (HexNAc...) serine glycosylation is present at S45. 4-hydroxyproline occurs at positions 55, 60, 61, 70, and 72. Serine amide is present on S75. The propeptide occupies 76–80 (GRRNH).

It belongs to the conotoxin A superfamily. In terms of processing, contains 3 disulfide bonds. As to expression, expressed by the venom duct.

Its subcellular location is the secreted. Its function is as follows. Neurotoxin with probable activity on sodium channel. Induces intense repetitive firing of the frog neuromuscular junction, leading to a tetanic contracture in muscle fiber (spastic paralysis). In vivo, shows the same effect as the whole venom when injected on fish prey. This Conus stercusmuscarum (Fly-specked cone) protein is Conotoxin SmIVB.